A 672-amino-acid polypeptide reads, in one-letter code: ATP-dependent zinc metalloprotease FtsH 1 (672 aa).

Positions 1–22 (MKKDSESNSSDKSNKEELSTGR) are disordered. The Cytoplasmic segment spans residues 1-23 (MKKDSESNSSDKSNKEELSTGRR). A helical transmembrane segment spans residues 24–44 (GGNPMIIALVITVLAAMLFFN). The Periplasmic segment spans residues 45–141 (QPEPSSLISA…KFSPPDNTAA (97 aa)). A helical membrane pass occupies residues 142-162 (ILNLLILVGLPLAIFFFIFMM). At 163-672 (IRRTRNDMMG…TSNASARRED (510 aa)) the chain is on the cytoplasmic side. An ATP-binding site is contributed by 237 to 244 (GPPGTGKT). H458 provides a ligand contact to Zn(2+). Residue E459 is part of the active site. The Zn(2+) site is built by H462 and D534. Positions 642–672 (RLGDEEGKVEQIMAPEGAAERTSNASARRED) are disordered. Positions 662–672 (RTSNASARRED) are enriched in polar residues.

It in the central section; belongs to the AAA ATPase family. This sequence in the C-terminal section; belongs to the peptidase M41 family. As to quaternary structure, homohexamer. Zn(2+) is required as a cofactor.

The protein localises to the cell inner membrane. In terms of biological role, acts as a processive, ATP-dependent zinc metallopeptidase for both cytoplasmic and membrane proteins. Plays a role in the quality control of integral membrane proteins. This chain is ATP-dependent zinc metalloprotease FtsH 1, found in Rhodopirellula baltica (strain DSM 10527 / NCIMB 13988 / SH1).